The following is a 308-amino-acid chain: D-alanine--D-alanine ligase (308 aa).

An ATP-grasp domain is found at 102-302; sequence KKVAAAAGVA…FGELLSWMVE (201 aa). 128–183 serves as a coordination point for ATP; it reads PMEPPYVVKPVREGSSFGVVIVKEDQTHPPQIISSAEWNYGAEVLVEKYIPGRELT. Mg(2+) is bound by residues aspartate 252, glutamate 269, and asparagine 271.

It belongs to the D-alanine--D-alanine ligase family. Mg(2+) is required as a cofactor. The cofactor is Mn(2+).

The protein localises to the cytoplasm. It carries out the reaction 2 D-alanine + ATP = D-alanyl-D-alanine + ADP + phosphate + H(+). Its pathway is cell wall biogenesis; peptidoglycan biosynthesis. Cell wall formation. The polypeptide is D-alanine--D-alanine ligase (Brucella anthropi (strain ATCC 49188 / DSM 6882 / CCUG 24695 / JCM 21032 / LMG 3331 / NBRC 15819 / NCTC 12168 / Alc 37) (Ochrobactrum anthropi)).